We begin with the raw amino-acid sequence, 468 residues long: Alcohol dehydrogenase (quinone), cytochrome c subunit (468 aa).

A signal peptide spans 1-23 (MINRLKVTFSAAAFSLLAGTALA). Cytochrome c domains are found at residues 31–134 (ALVQ…MHGV), 178–293 (PEIA…KSLP), and 317–407 (TASV…RTSW). Positions 45, 48, 49, 193, 196, 197, 330, 333, and 334 each coordinate heme c.

In terms of assembly, the alcohol dehydrogenase multicomponent enzyme system is composed of a dehydrogenase subunit I (AdhA) and a cytochrome c subunit II (AdhB). It depends on heme c as a cofactor.

Its subcellular location is the cell membrane. The enzyme catalyses ethanol + a ubiquinone = a ubiquinol + acetaldehyde. Cytochrome c component of the alcohol dehydrogenase multicomponent enzyme system which is involved in the production of acetic acid and in the ethanol oxidase respiratory chain. Quinohemoprotein alcohol dehydrogenase (ADH) catalyzes the oxidation of ethanol to acetaldehyde by transferring electrons to the ubiquinone embedded in the membrane phospholipids. The electrons transfer from ethanol to membranous ubiquinone occurs from pyrroloquinoline quinone (PQQ) to one heme c in subunit I (AdhA), and finally to two heme c in subunit II (AdhB). Besides ubiquinone reduction, ADH also has a ubiquinol (QH2) oxidation reaction which mediates electron transfer from ubiquinol to the non-energy generating bypass oxidase system. The electrons transfer occurs from ubiquinol (QH2) to the additional heme c within subunit II (AdhB). This chain is Alcohol dehydrogenase (quinone), cytochrome c subunit, found in Gluconacetobacter polyoxogenes (Acetobacter polyoxogenes).